We begin with the raw amino-acid sequence, 104 residues long: ATP-dependent Clp protease adapter protein ClpS (104 aa).

It belongs to the ClpS family. In terms of assembly, binds to the N-terminal domain of the chaperone ClpA.

In terms of biological role, involved in the modulation of the specificity of the ClpAP-mediated ATP-dependent protein degradation. In Burkholderia mallei (strain NCTC 10247), this protein is ATP-dependent Clp protease adapter protein ClpS.